The chain runs to 220 residues: UPF0319 protein YccT (220 aa).

An N-terminal signal peptide occupies residues 1-20 (MKTGIVTTLIALCLPVSVFA).

Belongs to the UPF0319 family.

The polypeptide is UPF0319 protein YccT (Escherichia coli O139:H28 (strain E24377A / ETEC)).